The following is an 810-amino-acid chain: Glycerol-3-phosphate acyltransferase (810 aa).

The short motif at 305 to 310 (CHRSHI) is the HXXXXD motif element.

Belongs to the GPAT/DAPAT family.

The protein resides in the cell inner membrane. The enzyme catalyses sn-glycerol 3-phosphate + an acyl-CoA = a 1-acyl-sn-glycero-3-phosphate + CoA. It participates in phospholipid metabolism; CDP-diacylglycerol biosynthesis; CDP-diacylglycerol from sn-glycerol 3-phosphate: step 1/3. The chain is Glycerol-3-phosphate acyltransferase from Haemophilus influenzae (strain PittEE).